Here is a 71-residue protein sequence, read N- to C-terminus: Antitoxin ParD2 (71 aa).

Functionally, antitoxin component of a type II toxin-antitoxin (TA) system. In Mycobacterium tuberculosis (strain CDC 1551 / Oshkosh), this protein is Antitoxin ParD2 (parD2).